Reading from the N-terminus, the 30-residue chain is Babycurus-toxin 1 (30 aa).

In terms of domain architecture, LCN-type CS-alpha/beta spans 2–30; that stretch reads KDGYPTNSKGCKISGCLPGENKFCLNECQ.

This sequence belongs to the long (4 C-C) scorpion toxin superfamily. Sodium channel inhibitor family. As to expression, expressed by the venom gland.

It localises to the secreted. Its function is as follows. Binds to sodium channels (Nav) and inhibits both the activation and inactivation of the activated channels, thereby blocking neuronal transmission. In Babycurus centrurimorphus (East African scorpion), this protein is Babycurus-toxin 1.